Consider the following 352-residue polypeptide: Geranylgeranyl transferase type-1 subunit beta (352 aa).

4 PFTB repeats span residues 135-180, 187-228, 236-276, and 283-325; these read VNKK…FILD, KESA…SLLG, FKEQ…MMID, and FASI…SFGN. Geranylgeranyl diphosphate-binding positions include 213 to 215 and 255 to 258; these read HGG and RTNK. Zn(2+)-binding residues include aspartate 261 and cysteine 263. 264–267 is a binding site for geranylgeranyl diphosphate; it reads YAFW. Histidine 313 contributes to the Zn(2+) binding site.

This sequence belongs to the protein prenyltransferase subunit beta family. Heterodimer of an alpha and a beta subunit. Zn(2+) serves as cofactor. Requires Mg(2+) as cofactor.

It catalyses the reaction geranylgeranyl diphosphate + L-cysteinyl-[protein] = S-geranylgeranyl-L-cysteinyl-[protein] + diphosphate. Its function is as follows. Catalyzes the transfer of a geranyl-geranyl moiety from geranyl-geranyl pyrophosphate to a cysteine at the fourth position from the C-terminus of proteins having the C-terminal sequence Cys-aliphatic-aliphatic-X. This is Geranylgeranyl transferase type-1 subunit beta (pggt1b) from Dictyostelium discoideum (Social amoeba).